We begin with the raw amino-acid sequence, 205 residues long: Ribonuclease HII (205 aa).

One can recognise an RNase H type-2 domain in the interval 16-205 (VSEVGIDEVG…KSFLKKSNLF (190 aa)). Asp-22, Glu-23, and Asp-118 together coordinate a divalent metal cation.

Belongs to the RNase HII family. Mn(2+) serves as cofactor. The cofactor is Mg(2+).

The protein localises to the cytoplasm. The catalysed reaction is Endonucleolytic cleavage to 5'-phosphomonoester.. In terms of biological role, endonuclease that specifically degrades the RNA of RNA-DNA hybrids. This is Ribonuclease HII from Prochlorococcus marinus (strain MIT 9215).